Here is a 138-residue protein sequence, read N- to C-terminus: Putative pre-16S rRNA nuclease (138 aa).

This sequence belongs to the YqgF nuclease family.

The protein localises to the cytoplasm. Its function is as follows. Could be a nuclease involved in processing of the 5'-end of pre-16S rRNA. The polypeptide is Putative pre-16S rRNA nuclease (Salmonella arizonae (strain ATCC BAA-731 / CDC346-86 / RSK2980)).